We begin with the raw amino-acid sequence, 445 residues long: GTPase Der (445 aa).

2 EngA-type G domains span residues 3–167 and 180–353; these read PVIA…YAGQ and IKIA…AAAM. GTP-binding positions include 9-16, 56-60, 119-122, 186-193, 233-237, and 298-301; these read GRPNVGKS, DTGGF, NKAE, DTAGL, and NKWD. The KH-like domain occupies 354–438; the sequence is SKLPTPKLTR…PLRIEFRSSN (85 aa).

The protein belongs to the TRAFAC class TrmE-Era-EngA-EngB-Septin-like GTPase superfamily. EngA (Der) GTPase family. In terms of assembly, associates with the 50S ribosomal subunit.

Its function is as follows. GTPase that plays an essential role in the late steps of ribosome biogenesis. This Burkholderia cenocepacia (strain ATCC BAA-245 / DSM 16553 / LMG 16656 / NCTC 13227 / J2315 / CF5610) (Burkholderia cepacia (strain J2315)) protein is GTPase Der.